Here is a 556-residue protein sequence, read N- to C-terminus: 2-succinyl-5-enolpyruvyl-6-hydroxy-3-cyclohexene-1-carboxylate synthase (556 aa).

The protein belongs to the TPP enzyme family. MenD subfamily. As to quaternary structure, homodimer. Requires Mg(2+) as cofactor. The cofactor is Mn(2+). Thiamine diphosphate serves as cofactor.

The enzyme catalyses isochorismate + 2-oxoglutarate + H(+) = 5-enolpyruvoyl-6-hydroxy-2-succinyl-cyclohex-3-ene-1-carboxylate + CO2. The protein operates within quinol/quinone metabolism; 1,4-dihydroxy-2-naphthoate biosynthesis; 1,4-dihydroxy-2-naphthoate from chorismate: step 2/7. It functions in the pathway quinol/quinone metabolism; menaquinone biosynthesis. Its function is as follows. Catalyzes the thiamine diphosphate-dependent decarboxylation of 2-oxoglutarate and the subsequent addition of the resulting succinic semialdehyde-thiamine pyrophosphate anion to isochorismate to yield 2-succinyl-5-enolpyruvyl-6-hydroxy-3-cyclohexene-1-carboxylate (SEPHCHC). The sequence is that of 2-succinyl-5-enolpyruvyl-6-hydroxy-3-cyclohexene-1-carboxylate synthase from Salmonella paratyphi A (strain AKU_12601).